A 236-amino-acid polypeptide reads, in one-letter code: 28 kDa antigen (236 aa).

The first 22 residues, 1–22 (MPNRRRCKLSTAISTVATLAIA), serve as a signal peptide directing secretion. Residues 76-105 (PVPSLTGTDDPGNGLRTPGLTSPDLTNQEL) are disordered. Over residues 94-105 (GLTSPDLTNQEL) the composition is skewed to polar residues.

It to M.tuberculosis ERP.

The chain is 28 kDa antigen from Mycobacterium leprae (strain TN).